The following is a 263-amino-acid chain: Triosephosphate isomerase (263 aa).

Residue 10–12 (NWK) coordinates substrate. Catalysis depends on histidine 104, which acts as the Electrophile. Glutamate 176 serves as the catalytic Proton acceptor. Substrate-binding positions include glycine 182, serine 221, and 242-243 (GG).

The protein belongs to the triosephosphate isomerase family. As to quaternary structure, homodimer.

It is found in the cytoplasm. It carries out the reaction D-glyceraldehyde 3-phosphate = dihydroxyacetone phosphate. It participates in carbohydrate biosynthesis; gluconeogenesis. Its pathway is carbohydrate degradation; glycolysis; D-glyceraldehyde 3-phosphate from glycerone phosphate: step 1/1. Involved in the gluconeogenesis. Catalyzes stereospecifically the conversion of dihydroxyacetone phosphate (DHAP) to D-glyceraldehyde-3-phosphate (G3P). The chain is Triosephosphate isomerase from Haemophilus influenzae (strain ATCC 51907 / DSM 11121 / KW20 / Rd).